We begin with the raw amino-acid sequence, 565 residues long: MRQSIFFMPTLKETPADAVAKSHQVMLRGGYIRQVTAGVYSYLPLGYKVLRKTEKIIEEEMANAGVVEMIMPHMLPASMWEESGRLPKYGPEMFRLKDRHGREMLLGPTHEETFTDVVAKSLKSYKQMPLQLYQIQTKFRDENRPRFGLLRGREFVMLDGYSFAASQEQLDKQFDDEKAAYLKIFKRTGVEVRPVIADSGTMGGKNSIEFQAPAAVGEDTIATNASGTYAANLEMAVSVDTFKQEPEELKAMEKVATPGCDSIDKLAEFLQVPATRIVKSVLYIVDEKKKVLVLIRADKEVNEVKLTHLLDCDSLRVAETSDLEELTGAGKGGVGPVNADWADEIVADKTVKGLYNVVVGAGESDAQFINANLDRDFRADRFADLRVANEGEPDPVDHEPLKFTTSIEVGHIFKLGTYYTETMGAKFLDQNGKSQPVIMGSYGIGVTRLLSAVVEQHATENGVAWPKEIAPFGIHIIQMKMKDEIQSKLAEDLEAKFAKYDVLYDDRNERPGVKFNDADLVGAPIRITVGRDAADGIVEVKRPGDDQAQKLAVADLEDFIANELD.

The protein belongs to the class-II aminoacyl-tRNA synthetase family. ProS type 1 subfamily. Homodimer.

It localises to the cytoplasm. The enzyme catalyses tRNA(Pro) + L-proline + ATP = L-prolyl-tRNA(Pro) + AMP + diphosphate. In terms of biological role, catalyzes the attachment of proline to tRNA(Pro) in a two-step reaction: proline is first activated by ATP to form Pro-AMP and then transferred to the acceptor end of tRNA(Pro). As ProRS can inadvertently accommodate and process non-cognate amino acids such as alanine and cysteine, to avoid such errors it has two additional distinct editing activities against alanine. One activity is designated as 'pretransfer' editing and involves the tRNA(Pro)-independent hydrolysis of activated Ala-AMP. The other activity is designated 'posttransfer' editing and involves deacylation of mischarged Ala-tRNA(Pro). The misacylated Cys-tRNA(Pro) is not edited by ProRS. This Lactobacillus delbrueckii subsp. bulgaricus (strain ATCC 11842 / DSM 20081 / BCRC 10696 / JCM 1002 / NBRC 13953 / NCIMB 11778 / NCTC 12712 / WDCM 00102 / Lb 14) protein is Proline--tRNA ligase.